The chain runs to 247 residues: ATP synthase subunit a (247 aa).

6 consecutive transmembrane segments (helical) span residues 24–44 (IAFT…SLLM), 82–102 (FFPF…VGII), 112–132 (IIVT…YGFY), 141–161 (LFVP…IEVI), 194–214 (MLGA…ALVV), and 219–239 (LELL…CIYI).

This sequence belongs to the ATPase A chain family. In terms of assembly, F-type ATPases have 2 components, CF(1) - the catalytic core - and CF(0) - the membrane proton channel. CF(1) has five subunits: alpha(3), beta(3), gamma(1), delta(1), epsilon(1). CF(0) has three main subunits: a(1), b(2) and c(9-12). The alpha and beta chains form an alternating ring which encloses part of the gamma chain. CF(1) is attached to CF(0) by a central stalk formed by the gamma and epsilon chains, while a peripheral stalk is formed by the delta and b chains.

It localises to the cell inner membrane. Key component of the proton channel; it plays a direct role in the translocation of protons across the membrane. This Nitrobacter winogradskyi (strain ATCC 25391 / DSM 10237 / CIP 104748 / NCIMB 11846 / Nb-255) protein is ATP synthase subunit a.